The following is a 376-amino-acid chain: Sterol 24-C-methyltransferase (376 aa).

The protein belongs to the class I-like SAM-binding methyltransferase superfamily. Erg6/SMT family.

The enzyme catalyses zymosterol + S-adenosyl-L-methionine = fecosterol + S-adenosyl-L-homocysteine + H(+). Its pathway is steroid metabolism; ergosterol biosynthesis; ergosterol from zymosterol: step 1/5. With respect to regulation, substrate analogs 25-azalanosterol and 24(R,S),25-epiminolanosterol act as inhibitors. Sterol 24-C-methyltransferase; part of the third module of ergosterol biosynthesis pathway that includes the late steps of the pathway. ERG6 catalyzes the methyl transfer from S-adenosyl-methionine to the C-24 of zymosterol to form fecosterol. The third module or late pathway involves the ergosterol synthesis itself through consecutive reactions that mainly occur in the endoplasmic reticulum (ER) membrane. Firstly, the squalene synthase ERG9 catalyzes the condensation of 2 farnesyl pyrophosphate moieties to form squalene, which is the precursor of all steroids. Squalene synthase is crucial for balancing the incorporation of farnesyl diphosphate (FPP) into sterol and nonsterol isoprene synthesis. Secondly, the squalene epoxidase ERG1 catalyzes the stereospecific oxidation of squalene to (S)-2,3-epoxysqualene, which is considered to be a rate-limiting enzyme in steroid biosynthesis. Then, the lanosterol synthase ERG7 catalyzes the cyclization of (S)-2,3 oxidosqualene to lanosterol, a reaction that forms the sterol core. In the next steps, lanosterol is transformed to zymosterol through a complex process involving various demethylation, reduction and desaturation reactions. The lanosterol 14-alpha-demethylase ERG11 (also known as CYP51) catalyzes C14-demethylation of lanosterol to produce 4,4'-dimethyl cholesta-8,14,24-triene-3-beta-ol, which is critical for ergosterol biosynthesis. The C-14 reductase ERG24 reduces the C14=C15 double bond of 4,4-dimethyl-cholesta-8,14,24-trienol to produce 4,4-dimethyl-cholesta-8,24-dienol. 4,4-dimethyl-cholesta-8,24-dienol is substrate of the C-4 demethylation complex ERG25-ERG26-ERG27 in which ERG25 catalyzes the three-step monooxygenation required for the demethylation of 4,4-dimethyl and 4alpha-methylsterols, ERG26 catalyzes the oxidative decarboxylation that results in a reduction of the 3-beta-hydroxy group at the C-3 carbon to an oxo group, and ERG27 is responsible for the reduction of the keto group on the C-3. ERG28 has a role as a scaffold to help anchor ERG25, ERG26 and ERG27 to the endoplasmic reticulum and ERG29 regulates the activity of the iron-containing C4-methylsterol oxidase ERG25. Then, the sterol 24-C-methyltransferase ERG6 catalyzes the methyl transfer from S-adenosyl-methionine to the C-24 of zymosterol to form fecosterol. The C-8 sterol isomerase ERG2 catalyzes the reaction which results in unsaturation at C-7 in the B ring of sterols and thus converts fecosterol to episterol. The sterol-C5-desaturase ERG3 then catalyzes the introduction of a C-5 double bond in the B ring to produce 5-dehydroepisterol. The C-22 sterol desaturase ERG5 further converts 5-dehydroepisterol into ergosta-5,7,22,24(28)-tetraen-3beta-ol by forming the C-22(23) double bond in the sterol side chain. Finally, ergosta-5,7,22,24(28)-tetraen-3beta-ol is substrate of the C-24(28) sterol reductase ERG4 to produce ergosterol. The protein is Sterol 24-C-methyltransferase of Candida albicans (strain SC5314 / ATCC MYA-2876) (Yeast).